The sequence spans 663 residues: Transketolase 1 (663 aa).

Position 26 (His-26) interacts with substrate. At Lys-46 the chain carries N6-acetyllysine. Residues His-66 and 114-116 (GPL) contribute to the thiamine diphosphate site. Residue Asp-155 participates in Mg(2+) binding. The thiamine diphosphate site is built by Gly-156 and Asn-185. Asn-185 and Ile-187 together coordinate Mg(2+). Substrate contacts are provided by His-261, Arg-358, and Ser-385. Thiamine diphosphate is bound at residue His-261. The active-site Proton donor is the Glu-411. Position 437 (Phe-437) interacts with thiamine diphosphate. Substrate is bound by residues His-461, Asp-469, His-473, and Arg-520.

This sequence belongs to the transketolase family. In terms of assembly, homodimer. Mg(2+) serves as cofactor. Ca(2+) is required as a cofactor. The cofactor is Mn(2+). It depends on Co(2+) as a cofactor. Requires thiamine diphosphate as cofactor.

It carries out the reaction D-sedoheptulose 7-phosphate + D-glyceraldehyde 3-phosphate = aldehydo-D-ribose 5-phosphate + D-xylulose 5-phosphate. Functionally, catalyzes the transfer of a two-carbon ketol group from a ketose donor to an aldose acceptor, via a covalent intermediate with the cofactor thiamine pyrophosphate. Thus, catalyzes the reversible transfer of a two-carbon ketol group from sedoheptulose-7-phosphate to glyceraldehyde-3-phosphate, producing xylulose-5-phosphate and ribose-5-phosphate. The protein is Transketolase 1 (tktA) of Escherichia coli (strain K12).